Reading from the N-terminus, the 71-residue chain is Small ribosomal subunit protein bS21 (71 aa).

Basic residues predominate over residues 48-59 (KAAAAVKRHAKK). The segment at 48 to 71 (KAAAAVKRHAKKVQRENRKFQRLY) is disordered. Residues 60-71 (VQRENRKFQRLY) are compositionally biased toward basic and acidic residues.

This sequence belongs to the bacterial ribosomal protein bS21 family.

This is Small ribosomal subunit protein bS21 from Teredinibacter turnerae (strain ATCC 39867 / T7901).